The chain runs to 66 residues: Large ribosomal subunit protein bL32 (66 aa).

The protein belongs to the bacterial ribosomal protein bL32 family.

The protein is Large ribosomal subunit protein bL32 of Acetivibrio thermocellus (strain ATCC 27405 / DSM 1237 / JCM 9322 / NBRC 103400 / NCIMB 10682 / NRRL B-4536 / VPI 7372) (Clostridium thermocellum).